The primary structure comprises 89 residues: uncharacterized protein (89 aa).

The signal sequence occupies residues Met1–Ala27.

This is an uncharacterized protein from Bacillus subtilis (strain 168).